A 1213-amino-acid chain; its full sequence is Formin (1213 aa).

Disordered regions lie at residues 1–24 (MEGG…SEPD), 66–111 (QANN…EPEP), 144–169 (VHTT…TSKC), 183–216 (GNNQ…PISQ), and 357–489 (DVSK…PKAN). 2 stretches are compositionally biased toward basic and acidic residues: residues 187–210 (SKEE…DTEL) and 431–464 (EAIK…DKSP). 2 coiled-coil regions span residues 428–450 (SELE…VFER) and 503–572 (EYQA…IGVS). The interval 624 to 774 (ISTQGENKDS…PRKPAIEPSR (151 aa)) is disordered. Residues 636–647 (VPSSESVLSCQP) show a composition bias toward polar residues. 3 stretches are compositionally biased toward pro residues: residues 650 to 672 (MLPP…PPPF), 680 to 689 (LVPPPPPLPT), and 718 to 751 (PAPP…PPGP). The 100-residue stretch at 652–751 (PPSPPPPPPP…LPPPPPPPGP (100 aa)) folds into the FH1 domain. Over residues 755–764 (FNSTLSSSQG) the composition is skewed to polar residues. Residues 766–1182 (RKPAIEPSRP…KVAQQSVSKL (417 aa)) enclose the FH2 domain. Positions 1050–1125 (FQASQVKFED…ENAQKCFEET (76 aa)) form a coiled coil. The tract at residues 1193 to 1213 (INPTASLKERLRQKEANVNAN) is disordered.

Belongs to the formin homology family. Cappuccino subfamily. In terms of tissue distribution, present in the adult brain, kidney, brain, heart and intestine and throughout the embryo.

The protein resides in the nucleus. Functionally, is important for morphogenesis of limb and kidney and may be involved in determining dorsoventral neural tube polarity and motor neuron induction. It may also have a function in differentiated cells or be involved in maintaining specific differentiated states. This Gallus gallus (Chicken) protein is Formin (LD).